Consider the following 729-residue polypeptide: MLYKGDTLYLDWLEDGIAELVFDAPGSVNKLDTATVASLGEAIGVLEQQSDLKGLLLRSNKAAFIVGADITEFLSLFLVPEEQLSQWLHFANSVFNRLEDLPVPTIAAVNGYALGGGCECVLATDYRLATPDLRIGLPETKLGIMPGFGGSVRMPRMLGADSALEIIAAGKDVGADQALKIGLVDGVVKAEKLVEGAKAVLRQAINGDLDWKAKRQPKLEPLKLSKIEATMSFTIAKGMVAQTAGKHYPAPITAVKTIEAAARFGREEALNLENKSFVPLAHTNEARALVGIFLNDQYVKGKAKKLTKDVETPKQAAVLGAGIMGGGIAYQSAWKGVPVVMKDINDKSLTLGMTEAAKLLNKQLERGKIDGLKLAGVISTIHPTLDYAGFDRVDVVVEAVVENPKVKKAVLAETEQKVRPDTVLASNTSTIPISELANALERPENFCGMHFFNPVHRMPLVEIIRGEKSSDETIAKVVAWASKMGKTPIVVNDCPGFFVNRVLFPYFAGFSQLLRDGADFRKIDKVMEKQFGWPMGPAYLLDVVGIDTAHHAQAVMAAGFPQRMQKDYRDAIDALFDANRFGQKNGLGFWRYKEDSKGKPKKEEDAAVEDLLAEVSQPKRDFSEEEIIARMMIPMVNEVVRCLEEGIIATPAEADMALVYGLGFPPFHGGAFRWLDTLGSAKYLDMAQQYQHLGPLYEVPEGLRNKARHNEPYYPPVEPARPVGDLKTA.

Positions 1-189 (MLYKGDTLYL…KIGLVDGVVK (189 aa)) are enoyl-CoA hydratase/isomerase. Aspartate 296 serves as a coordination point for substrate. A 3-hydroxyacyl-CoA dehydrogenase region spans residues 311–729 (ETPKQAAVLG…ARPVGDLKTA (419 aa)). Residues methionine 324, aspartate 343, 400–402 (VVE), lysine 407, and serine 429 contribute to the NAD(+) site. Histidine 450 acts as the For 3-hydroxyacyl-CoA dehydrogenase activity in catalysis. Asparagine 453 provides a ligand contact to NAD(+). 2 residues coordinate substrate: asparagine 500 and tyrosine 660. A disordered region spans residues 708–729 (RHNEPYYPPVEPARPVGDLKTA).

It in the N-terminal section; belongs to the enoyl-CoA hydratase/isomerase family. This sequence in the C-terminal section; belongs to the 3-hydroxyacyl-CoA dehydrogenase family. Heterotetramer of two alpha chains (FadB) and two beta chains (FadA).

It carries out the reaction a (3S)-3-hydroxyacyl-CoA + NAD(+) = a 3-oxoacyl-CoA + NADH + H(+). It catalyses the reaction a (3S)-3-hydroxyacyl-CoA = a (2E)-enoyl-CoA + H2O. The catalysed reaction is a 4-saturated-(3S)-3-hydroxyacyl-CoA = a (3E)-enoyl-CoA + H2O. The enzyme catalyses (3S)-3-hydroxybutanoyl-CoA = (3R)-3-hydroxybutanoyl-CoA. It carries out the reaction a (3Z)-enoyl-CoA = a 4-saturated (2E)-enoyl-CoA. It catalyses the reaction a (3E)-enoyl-CoA = a 4-saturated (2E)-enoyl-CoA. The protein operates within lipid metabolism; fatty acid beta-oxidation. Involved in the aerobic and anaerobic degradation of long-chain fatty acids via beta-oxidation cycle. Catalyzes the formation of 3-oxoacyl-CoA from enoyl-CoA via L-3-hydroxyacyl-CoA. It can also use D-3-hydroxyacyl-CoA and cis-3-enoyl-CoA as substrate. The chain is Fatty acid oxidation complex subunit alpha from Escherichia coli O8 (strain IAI1).